Consider the following 237-residue polypeptide: Ribosomal RNA large subunit methyltransferase E (237 aa).

S-adenosyl-L-methionine is bound by residues G76, W78, D99, D115, and D139. Residue K179 is the Proton acceptor of the active site.

It belongs to the class I-like SAM-binding methyltransferase superfamily. RNA methyltransferase RlmE family.

The protein resides in the cytoplasm. The catalysed reaction is uridine(2552) in 23S rRNA + S-adenosyl-L-methionine = 2'-O-methyluridine(2552) in 23S rRNA + S-adenosyl-L-homocysteine + H(+). Its function is as follows. Specifically methylates the uridine in position 2552 of 23S rRNA at the 2'-O position of the ribose in the fully assembled 50S ribosomal subunit. In Rhodopseudomonas palustris (strain ATCC BAA-98 / CGA009), this protein is Ribosomal RNA large subunit methyltransferase E.